A 542-amino-acid chain; its full sequence is Chloride channel CLIC-like protein 1 (542 aa).

The signal sequence occupies residues Met-1 to Ala-18. Over His-19–Asn-184 the chain is Lumenal. A helical transmembrane segment spans residues Val-185–Thr-205. Residues Tyr-206–Val-216 lie on the Cytoplasmic side of the membrane. The chain crosses the membrane as a helical span at residues Phe-217–Phe-237. Residues Ala-238 to Glu-329 are Lumenal-facing. A helical membrane pass occupies residues Ile-330–Cys-350. Over Tyr-351–Gly-542 the chain is Cytoplasmic. The segment at Glu-369–Gly-394 is disordered. Residues Gly-377 to Pro-389 show a composition bias toward basic and acidic residues. Phosphoserine occurs at positions 438 and 464. Residues Ala-452 to Gly-542 are disordered. The segment covering Glu-480–Ser-491 has biased composition (low complexity). Thr-482 bears the Phosphothreonine mark. Ser-532 carries the post-translational modification Phosphoserine.

The protein belongs to the chloride channel MCLC family. In terms of assembly, homomultimers. Interacts with mitochondrial protein PIGBOS1 (via C-terminus); the interaction occurs at the mitochondria-associated endoplasmic reticulum (ER) membrane, a zone of contact between the ER and mitochondrial membranes, but does not appear to play a role in ER-mitochondria tethering and is not affected by ER stress. Interacts with CALR.

The protein localises to the endoplasmic reticulum membrane. It catalyses the reaction chloride(in) = chloride(out). The catalysed reaction is bromide(in) = bromide(out). It carries out the reaction nitrate(in) = nitrate(out). The enzyme catalyses fluoride(in) = fluoride(out). Its function is as follows. Anion-selective channel with Ca(2+)-dependent and voltage-independent gating. Permeable to small monovalent anions with selectivity for bromide &gt; chloride &gt; nitrate &gt; fluoride. Operates in the endoplasmic reticulum (ER) membrane where it mediates chloride efflux to compensate for the loss of positive charges from the ER lumen upon Ca(2+) release. Contributes to the maintenance of ER Ca(2+) pools and activation of unfolded protein response to prevent accumulation of misfolded proteins in the ER lumen. Particularly involved in ER homeostasis mechanisms underlying motor neurons and retinal photoreceptors survival. This Bos taurus (Bovine) protein is Chloride channel CLIC-like protein 1 (CLCC1).